Reading from the N-terminus, the 221-residue chain is Uridylate kinase (221 aa).

7-11 contacts ATP; the sequence is KISGK. Glycine 43 is a UMP binding site. Glycine 44 and arginine 48 together coordinate ATP. UMP-binding positions include aspartate 62 and 109–115; that span reads LQPGQST. The ATP site is built by threonine 135 and tyrosine 141.

This sequence belongs to the UMP kinase family. Homohexamer.

It localises to the cytoplasm. The catalysed reaction is UMP + ATP = UDP + ADP. It functions in the pathway pyrimidine metabolism; CTP biosynthesis via de novo pathway; UDP from UMP (UMPK route): step 1/1. With respect to regulation, inhibited by UTP. Catalyzes the reversible phosphorylation of UMP to UDP. The chain is Uridylate kinase from Ignicoccus hospitalis (strain KIN4/I / DSM 18386 / JCM 14125).